The sequence spans 87 residues: Putative BTB/POZ domain-containing protein At3g29740 (87 aa).

A BTB domain is found at 24–87 (VDVRLKAGDS…KHTELVALVE (64 aa)).

It functions in the pathway protein modification; protein ubiquitination. May act as a substrate-specific adapter of an E3 ubiquitin-protein ligase complex (CUL3-RBX1-BTB) which mediates the ubiquitination and subsequent proteasomal degradation of target proteins. The protein is Putative BTB/POZ domain-containing protein At3g29740 of Arabidopsis thaliana (Mouse-ear cress).